We begin with the raw amino-acid sequence, 908 residues long: SKI/DACH domain-containing protein 1 (908 aa).

Positions 337–353 (HHHHHHHHHHHHHHHRA) are enriched in basic residues. The disordered stretch occupies residues 337–461 (HHHHHHHHHH…SSSGSSQVSV (125 aa)). Composition is skewed to low complexity over residues 370-389 (PHLG…SSYS) and 396-410 (SDFG…NSVS). The segment covering 411-429 (SEEEEEEGEEEEEEEEEEG) has biased composition (acidic residues). The segment covering 449–461 (ESDSSSGSSQVSV) has biased composition (low complexity). Lysine 688 participates in a covalent cross-link: Glycyl lysine isopeptide (Lys-Gly) (interchain with G-Cter in SUMO2). 2 disordered regions span residues 744-763 (ETPS…TLGS) and 792-818 (LQTP…TNEG). Residues 746–761 (PSLNPLAQSQGLSCTL) show a composition bias toward polar residues.

Belongs to the DACH/dachshund family.

This chain is SKI/DACH domain-containing protein 1 (SKIDA1), found in Homo sapiens (Human).